Here is a 398-residue protein sequence, read N- to C-terminus: S-adenosylmethionine synthase (398 aa).

ATP is bound at residue His17. A Mg(2+)-binding site is contributed by Asp19. Residue Glu45 coordinates K(+). Positions 58 and 101 each coordinate L-methionine. The segment at 101 to 111 (QSPDIAQGVDT) is flexible loop. ATP contacts are provided by residues 176-178 (DGK), 243-244 (RF), Asp252, 258-259 (RK), and Lys279. Asp252 is a binding site for L-methionine. Lys283 serves as a coordination point for L-methionine.

Belongs to the AdoMet synthase family. In terms of assembly, homotetramer; dimer of dimers. It depends on Mg(2+) as a cofactor. The cofactor is K(+).

It is found in the cytoplasm. It carries out the reaction L-methionine + ATP + H2O = S-adenosyl-L-methionine + phosphate + diphosphate. The protein operates within amino-acid biosynthesis; S-adenosyl-L-methionine biosynthesis; S-adenosyl-L-methionine from L-methionine: step 1/1. Its function is as follows. Catalyzes the formation of S-adenosylmethionine (AdoMet) from methionine and ATP. The overall synthetic reaction is composed of two sequential steps, AdoMet formation and the subsequent tripolyphosphate hydrolysis which occurs prior to release of AdoMet from the enzyme. This is S-adenosylmethionine synthase from Staphylococcus saprophyticus subsp. saprophyticus (strain ATCC 15305 / DSM 20229 / NCIMB 8711 / NCTC 7292 / S-41).